The sequence spans 182 residues: ATP synthase subunit b, chloroplastic (182 aa).

Residues 33–51 form a helical membrane-spanning segment; it reads VLNIAILLSGVIYLGRNFL.

This sequence belongs to the ATPase B chain family. F-type ATPases have 2 components, F(1) - the catalytic core - and F(0) - the membrane proton channel. F(1) has five subunits: alpha(3), beta(3), gamma(1), delta(1), epsilon(1). F(0) has four main subunits: a(1), b(1), b'(1) and c(10-14). The alpha and beta chains form an alternating ring which encloses part of the gamma chain. F(1) is attached to F(0) by a central stalk formed by the gamma and epsilon chains, while a peripheral stalk is formed by the delta, b and b' chains.

It is found in the plastid. Its subcellular location is the chloroplast thylakoid membrane. Its function is as follows. F(1)F(0) ATP synthase produces ATP from ADP in the presence of a proton or sodium gradient. F-type ATPases consist of two structural domains, F(1) containing the extramembraneous catalytic core and F(0) containing the membrane proton channel, linked together by a central stalk and a peripheral stalk. During catalysis, ATP synthesis in the catalytic domain of F(1) is coupled via a rotary mechanism of the central stalk subunits to proton translocation. In terms of biological role, component of the F(0) channel, it forms part of the peripheral stalk, linking F(1) to F(0). The polypeptide is ATP synthase subunit b, chloroplastic (Guillardia theta (Cryptophyte)).